We begin with the raw amino-acid sequence, 293 residues long: Triacylglycerol lipase (293 aa).

The AB hydrolase-1 domain occupies 10–206 (PILLVHGLFG…YYSWSGIIKG (197 aa)). Residue Leu17 coordinates substrate. The active-site Nucleophile is the Ser83. Gln84 contributes to the substrate binding site. Asp217 provides a ligand contact to Ca(2+). Active-site charge relay system residues include Asp238 and His260. Residues Asp262, His266, and Arg269 each contribute to the Ca(2+) site.

The protein belongs to the AB hydrolase superfamily. Pseudomonas lipase family. Ca(2+) is required as a cofactor.

It localises to the secreted. The catalysed reaction is a triacylglycerol + H2O = a diacylglycerol + a fatty acid + H(+). Its function is as follows. Catalyzes the hydrolysis of triacylglycerols, with the highest activity with tributyrin (C4), lower activity with tricaprylin (C8), and much lower activity with triacetin (C2), trilaurin (C12) and triolein (C18). The chain is Triacylglycerol lipase (lips) from Pseudomonas fragi.